Reading from the N-terminus, the 147-residue chain is Globin, major polymeric component P1 (147 aa).

The Globin domain occupies 2-146 (HLTADQVAAL…ISDACIAGLQ (145 aa)). Histidine 96 provides a ligand contact to heme b.

The protein belongs to the globin family. Polymer.

The chain is Globin, major polymeric component P1 from Glycera dibranchiata (Bloodworm).